The following is a 124-amino-acid chain: Biogenesis of lysosome-related organelles complex 1 subunit CNL1 (124 aa).

The segment at 1–20 (MMSENITAVEPQENNDVEAD) is disordered. Residues 75–98 (IGMAKDLLQKCDDLEKHYDQLDAV) adopt a coiled-coil conformation.

Belongs to the BLOC1S4 family. As to quaternary structure, component of the biogenesis of lysosome-related organelles complex-1 (BLOC-1).

Its subcellular location is the cytoplasm. In terms of biological role, component of the biogenesis of lysosome-related organelles complex-1 (BLOC-1), a complex that is involved in endosomal cargo sorting. The chain is Biogenesis of lysosome-related organelles complex 1 subunit CNL1 (CLN1) from Kluyveromyces lactis (strain ATCC 8585 / CBS 2359 / DSM 70799 / NBRC 1267 / NRRL Y-1140 / WM37) (Yeast).